The chain runs to 539 residues: uncharacterized protein (539 aa).

ABC transporter domains lie at 8–265 (VRIT…SRAL) and 307–537 (IELD…IGDM). 339–346 (GDNGSGKS) contributes to the ATP binding site.

Belongs to the ABC transporter superfamily.

The protein resides in the mitochondrion. This is an uncharacterized protein from Saccharomyces cerevisiae (strain ATCC 204508 / S288c) (Baker's yeast).